A 231-amino-acid chain; its full sequence is Endonuclease NucS (231 aa).

The protein belongs to the NucS endonuclease family.

Its subcellular location is the cytoplasm. Its function is as follows. Cleaves both 3' and 5' ssDNA extremities of branched DNA structures. The polypeptide is Endonuclease NucS (Micrococcus luteus (strain ATCC 4698 / DSM 20030 / JCM 1464 / CCM 169 / CCUG 5858 / IAM 1056 / NBRC 3333 / NCIMB 9278 / NCTC 2665 / VKM Ac-2230) (Micrococcus lysodeikticus)).